The primary structure comprises 184 residues: UPF0398 protein BAA_1648 (184 aa).

This sequence belongs to the UPF0398 family.

This is UPF0398 protein BAA_1648 from Bacillus anthracis (strain A0248).